The sequence spans 281 residues: Tetraspanin-33 (281 aa).

Residues 1-23 (MGNAKRATQNDEDYTFVSPVVKY) lie on the Cytoplasmic side of the membrane. A helical transmembrane segment spans residues 24 to 44 (LLFFFNMIFWIISLVLISIGV). Residues 45–62 (YSRIVKHETALACLTVDP) are Extracellular-facing. A helical membrane pass occupies residues 63 to 83 (ALILMVVGILMFFITFCGCVG). Over 84–94 (SLRENICLLQT) the chain is Cytoplasmic. Residues 95–115 (FCIFLTIMFLLQLLAGVLGFV) traverse the membrane as a helical segment. Residues 116–233 (FSDKARGKVT…DILVNWIHSN (118 aa)) lie on the Extracellular side of the membrane. Disulfide bonds link Cys154/Cys222, Cys155/Cys187, Cys171/Cys181, and Cys188/Cys201. The N-linked (GlcNAc...) asparagine glycan is linked to Asn170. Residues 234–254 (LFLLGGIALGLTIPQLVGILL) traverse the membrane as a helical segment. At 255 to 281 (SQVLINQIQDQIKLQNYNQQHRSDPWS) the chain is on the cytoplasmic side.

Belongs to the tetraspanin (TM4SF) family. As to quaternary structure, homodimer; disulfide-linked.

The protein localises to the cell membrane. The protein resides in the cell junction. It localises to the adherens junction. Its subcellular location is the cytoplasm. Functionally, part of TspanC8 subgroup, composed of 6 members that interact with the transmembrane metalloprotease ADAM10. This interaction is required for ADAM10 exit from the endoplasmic reticulum and for enzymatic maturation and trafficking to the cell surface as well as substrate specificity. Different TspanC8/ADAM10 complexes have distinct substrates. This is Tetraspanin-33 (tspan33) from Danio rerio (Zebrafish).